A 124-amino-acid polypeptide reads, in one-letter code: Large ribosomal subunit protein bL12 (124 aa).

This sequence belongs to the bacterial ribosomal protein bL12 family. In terms of assembly, homodimer. Part of the ribosomal stalk of the 50S ribosomal subunit. Forms a multimeric L10(L12)X complex, where L10 forms an elongated spine to which 2 to 4 L12 dimers bind in a sequential fashion. Binds GTP-bound translation factors.

Forms part of the ribosomal stalk which helps the ribosome interact with GTP-bound translation factors. Is thus essential for accurate translation. The sequence is that of Large ribosomal subunit protein bL12 from Herminiimonas arsenicoxydans.